We begin with the raw amino-acid sequence, 380 residues long: Cytochrome b (380 aa).

4 consecutive transmembrane segments (helical) span residues 33 to 53, 77 to 98, 113 to 133, and 178 to 198; these read FGSL…FLAM, WLIR…YLHV, WNIG…GYVL, and FFAF…IHLL. Heme b-binding residues include H83 and H97. Residues H182 and H196 each coordinate heme b. H201 lines the a ubiquinone pocket. The next 4 helical transmembrane spans lie at 226–246, 288–308, 320–340, and 347–367; these read YKDL…ALFS, LGGV…PMLH, PSQI…WIGG, and FVLI…IALP.

This sequence belongs to the cytochrome b family. As to quaternary structure, the cytochrome bc1 complex contains 3 respiratory subunits (MT-CYB, CYC1 and UQCRFS1), 2 core proteins (UQCRC1 and UQCRC2) and probably 6 low-molecular weight proteins. Heme b serves as cofactor.

Its subcellular location is the mitochondrion inner membrane. Functionally, component of the ubiquinol-cytochrome c reductase complex (complex III or cytochrome b-c1 complex) that is part of the mitochondrial respiratory chain. The b-c1 complex mediates electron transfer from ubiquinol to cytochrome c. Contributes to the generation of a proton gradient across the mitochondrial membrane that is then used for ATP synthesis. The sequence is that of Cytochrome b (mt-cyb) from Acipenser sinensis (Chinese sturgeon).